We begin with the raw amino-acid sequence, 317 residues long: Melanocyte-stimulating hormone receptor (317 aa).

The Extracellular segment spans residues 1–37; the sequence is MPAQGSQRSXLGSLNSTLMATPSLGLAANQSGPQCLE. 2 N-linked (GlcNAc...) asparagine glycosylation sites follow: Asn-15 and Asn-29. Residues 38–63 traverse the membrane as a helical segment; the sequence is VSVPDGLFLCLGLVSLVENMLVVAAI. Residues 64–72 are Cytoplasmic-facing; it reads AKNRNLHSP. A helical transmembrane segment spans residues 73–93; sequence MYCFICCLALSDLLVSISNVL. At 94–118 the chain is on the extracellular side; the sequence is ETAVMLLLEAGALAVGATVVQQLDN. Residues 119–140 traverse the membrane as a helical segment; the sequence is VIDVLICSSMVSSLCFLGAIAM. Over 141 to 163 the chain is Cytoplasmic; it reads DRYISIFYALRYHSIVTLSRAQW. The chain crosses the membrane as a helical span at residues 164-183; sequence ATAAVWAASILSSTLFIAYY. Over 184–191 the chain is Extracellular; it reads DRTVVLLC. The chain crosses the membrane as a helical span at residues 192 to 211; that stretch reads LVVFFLAMLVLMAVLYAHML. At 212–240 the chain is on the cytoplasmic side; it reads TQACQHVQGITRLHKRQHLVQQGFGLKGA. Residues 241–266 traverse the membrane as a helical segment; that stretch reads ATLTILLGVFLLCWGPFFLHLTLIAV. The Extracellular portion of the chain corresponds to 267 to 279; the sequence is CPQHPTCSCVFKN. The chain crosses the membrane as a helical span at residues 280 to 300; the sequence is FKLFLALIICNAIVDPLIYAF. The Cytoplasmic segment spans residues 301-317; it reads RSQELRKTLKEVLLFSW.

Belongs to the G-protein coupled receptor 1 family. In terms of assembly, interacts with MGRN1, but does not undergo MGRN1-mediated ubiquitination; this interaction competes with GNAS-binding and thus inhibits agonist-induced cAMP production. Interacts with OPN3; the interaction results in a decrease in MC1R-mediated cAMP signaling and ultimately a decrease in melanin production in melanocytes.

It is found in the cell membrane. Functionally, receptor for MSH (alpha, beta and gamma) and ACTH. The activity of this receptor is mediated by G proteins which activate adenylate cyclase. Mediates melanogenesis, the production of eumelanin (black/brown) and phaeomelanin (red/yellow), via regulation of cAMP signaling in melanocytes. This Galago senegalensis (Northern lesser bushbaby) protein is Melanocyte-stimulating hormone receptor (MC1R).